Consider the following 709-residue polypeptide: Polyribonucleotide nucleotidyltransferase (709 aa).

Residues Asp486 and Asp492 each coordinate Mg(2+). The KH domain maps to 553–612 (PRIHTIKINADKIKDVIGKGGSVIRALTEETGTTIEIEDDGTVKIAATSGEQAKQAIARI). Residues 622-690 (GRIYNGKVTR…RQGRIRLSMK (69 aa)) enclose the S1 motif domain. The interval 690–709 (KEAQATQQEAAETSSEDPAN) is disordered. A compositionally biased stretch (low complexity) spans 691-702 (EAQATQQEAAET).

The protein belongs to the polyribonucleotide nucleotidyltransferase family. Component of the RNA degradosome, which is a multiprotein complex involved in RNA processing and mRNA degradation. Mg(2+) serves as cofactor.

The protein resides in the cytoplasm. The enzyme catalyses RNA(n+1) + phosphate = RNA(n) + a ribonucleoside 5'-diphosphate. In terms of biological role, involved in mRNA degradation. Catalyzes the phosphorolysis of single-stranded polyribonucleotides processively in the 3'- to 5'-direction. The protein is Polyribonucleotide nucleotidyltransferase of Proteus mirabilis (strain HI4320).